Here is a 401-residue protein sequence, read N- to C-terminus: (1R,4R,5S)-(-)-guaia-6,10(14)-diene synthase (401 aa).

2 residues coordinate Mg(2+): aspartate 134 and glutamate 139. Residues 134 to 138 (DDQFD) carry the DDXXD motif motif. Substrate is bound at residue arginine 242. Residues asparagine 288 and serine 292 each coordinate Mg(2+). Lysine 295 provides a ligand contact to substrate. Aspartate 296 contacts Mg(2+). Residue 375–376 (RY) participates in substrate binding.

This sequence belongs to the terpene synthase family. Mg(2+) serves as cofactor.

The catalysed reaction is (2E,6E)-farnesyl diphosphate = (1R,4R,5S)-(-)-guaia-6,10(14)-diene + diphosphate. Its pathway is secondary metabolite biosynthesis; terpenoid biosynthesis. Catalyzes the conversion of (2E,6E)-farnesyl diphosphate (FPP) to yield the bicyclic sesquiterpene guaia-6,10(14)-diene via a 1,10-cyclization, which requires the abstraction of the pyrophosphate from FPP to yield the (E,E)-germacradienyl cation. The only accepted substrate is farnesyl diphosphate (FPP). This is (1R,4R,5S)-(-)-guaia-6,10(14)-diene synthase from Fusarium mangiferae (Mango malformation disease fungus).